Consider the following 459-residue polypeptide: Interleukin-7 receptor subunit alpha (459 aa).

Positions 1-20 are cleaved as a signal peptide; sequence MTILGTTFGMVFSLLQVVSG. The Extracellular portion of the chain corresponds to 21–239; the sequence is ESGYAQNGDL…EINNSSGEMD (219 aa). Cys42 and Cys57 are joined by a disulfide. N-linked (GlcNAc...) asparagine glycosylation is found at Asn49 and Asn65. 2 disulfide bridges follow: Cys74/Cys82 and Cys108/Cys118. A Fibronectin type-III domain is found at 131-231; sequence APFDLSVVYR…PSYYFRTPEI (101 aa). Asn151 and Asn182 each carry an N-linked (GlcNAc...) asparagine glycan. Positions 217–221 match the WSXWS motif motif; that stretch reads WSEWS. N-linked (GlcNAc...) asparagine glycosylation is found at Asn232 and Asn233. The chain crosses the membrane as a helical span at residues 240–264; it reads PILLTISILSFFSVALLVILACVLW. Topologically, residues 265–459 are cytoplasmic; that stretch reads KKRIKPIVWP…VTMSSFYQNQ (195 aa). A Box 1 motif motif is present at residues 272 to 280; that stretch reads VWPSLPDHK. Residue Thr282 is modified to Phosphothreonine; by PKC.

It belongs to the type I cytokine receptor family. Type 4 subfamily. As to quaternary structure, the IL7 receptor is a heterodimer of IL7R and IL2RG. The TSLP receptor is a heterodimer of CRLF2 and IL7R. Interacts with CD53. In terms of processing, N-glycosylated IL-7Ralpha binds IL7 300-fold more tightly than the unglycosylated form. Post-translationally, ubiquitinated by MARCHF8; leading to lysosomal degradation.

It localises to the cell membrane. It is found in the secreted. Its function is as follows. Receptor for interleukin-7. Also acts as a receptor for thymic stromal lymphopoietin (TSLP). In Homo sapiens (Human), this protein is Interleukin-7 receptor subunit alpha (IL7R).